Reading from the N-terminus, the 265-residue chain is Putative carbamate hydrolase RutD (265 aa).

In terms of domain architecture, AB hydrolase-1 spans 14-123 (PTLVLSSGLG…WSSPNPHSAR (110 aa)).

It belongs to the AB hydrolase superfamily. Hydrolase RutD family.

It catalyses the reaction carbamate + 2 H(+) = NH4(+) + CO2. Functionally, involved in pyrimidine catabolism. May facilitate the hydrolysis of carbamate, a reaction that can also occur spontaneously. This is Putative carbamate hydrolase RutD from Stutzerimonas stutzeri (strain A1501) (Pseudomonas stutzeri).